Here is a 367-residue protein sequence, read N- to C-terminus: Phospho-N-acetylmuramoyl-pentapeptide-transferase (367 aa).

The next 10 helical transmembrane spans lie at 30–50 (AAAITALLITLVAGPGFIALL), 71–91 (LPTMGGLLIIISVEVSVLLWA), 94–114 (TDPHVWLIMLALLWMGVIGFI), 138–158 (ISLGLVVGIYTSMDPVFSVLM), 169–189 (LTIDYGIFYVPVVIFIITALS), 200–220 (GLAAGSSAIVIFGLGGFAYLA), 237–257 (GGEIAVVCMAATMACVGFLWF), 264–284 (IIMGDTGSLALGSTIAVTALL), 289–309 (LLLPVLGGLFFLETLSVSLQV), and 344–364 (KIVIRFWIVTILLFLTSLMTL).

It belongs to the glycosyltransferase 4 family. MraY subfamily. It depends on Mg(2+) as a cofactor.

It localises to the cell inner membrane. The catalysed reaction is UDP-N-acetyl-alpha-D-muramoyl-L-alanyl-gamma-D-glutamyl-meso-2,6-diaminopimeloyl-D-alanyl-D-alanine + di-trans,octa-cis-undecaprenyl phosphate = di-trans,octa-cis-undecaprenyl diphospho-N-acetyl-alpha-D-muramoyl-L-alanyl-D-glutamyl-meso-2,6-diaminopimeloyl-D-alanyl-D-alanine + UMP. It participates in cell wall biogenesis; peptidoglycan biosynthesis. In terms of biological role, catalyzes the initial step of the lipid cycle reactions in the biosynthesis of the cell wall peptidoglycan: transfers peptidoglycan precursor phospho-MurNAc-pentapeptide from UDP-MurNAc-pentapeptide onto the lipid carrier undecaprenyl phosphate, yielding undecaprenyl-pyrophosphoryl-MurNAc-pentapeptide, known as lipid I. This chain is Phospho-N-acetylmuramoyl-pentapeptide-transferase, found in Chlorobium phaeovibrioides (strain DSM 265 / 1930) (Prosthecochloris vibrioformis (strain DSM 265)).